A 555-amino-acid chain; its full sequence is Glutamine--tRNA ligase (555 aa).

The 'HIGH' region motif lies at 34-44 (PEPNGYLHIGH). Residues 35–37 (EPN) and 41–47 (HIGHAKS) contribute to the ATP site. Residues Asp-67 and Tyr-212 each contribute to the L-glutamine site. Residues Thr-231, 261-262 (RL), and 269-271 (MSK) each bind ATP. The 'KMSKS' region motif lies at 268–272 (VMSKR). The interaction with tRNA stretch occupies residues 317-324 (TKQDNTIE).

Belongs to the class-I aminoacyl-tRNA synthetase family. As to quaternary structure, monomer.

The protein resides in the cytoplasm. It catalyses the reaction tRNA(Gln) + L-glutamine + ATP = L-glutaminyl-tRNA(Gln) + AMP + diphosphate. In Salmonella newport (strain SL254), this protein is Glutamine--tRNA ligase.